The primary structure comprises 200 residues: ATP synthase subunit s, mitochondrial (200 aa).

The N-terminal 25 residues, 1–25 (MMLFGKISQQLCGLKKLPWSRDSRY), are a transit peptide targeting the mitochondrion. Residues 1-61 (MMLFGKISQQ…SEWLLRCGAM (61 aa)) form an N-terminal domain region. G59 serves as a coordination point for Mg(2+). 4 LRR repeats span residues 62-87 (VRYH…KYKI), 88-116 (QAID…KIRL), 117-141 (CKCH…KSML), and 142-173 (EMEI…LSDL). T93 serves as a coordination point for Mg(2+).

Belongs to the ATP synthase subunit s family. In terms of assembly, homotetramer. Associates with ATP synthase.

The protein localises to the mitochondrion. It is found in the mitochondrion inner membrane. Involved in regulation of mitochondrial membrane ATP synthase. Necessary for H(+) conduction of ATP synthase. Facilitates energy-driven catalysis of ATP synthesis by blocking a proton leak through an alternative proton exit pathway. The chain is ATP synthase subunit s, mitochondrial (DMAC2L) from Bos taurus (Bovine).